The sequence spans 150 residues: Large ribosomal subunit protein bL9 (150 aa).

This sequence belongs to the bacterial ribosomal protein bL9 family.

Its function is as follows. Binds to the 23S rRNA. This Baumannia cicadellinicola subsp. Homalodisca coagulata protein is Large ribosomal subunit protein bL9.